The chain runs to 376 residues: Methionine import ATP-binding protein MetN 2 (376 aa).

Residues 34 to 273 form the ABC transporter domain; it reads VRFINLGKTY…PQHDVSKTLL (240 aa). 70–77 serves as a coordination point for ATP; that stretch reads GRSGAGKS.

It belongs to the ABC transporter superfamily. Methionine importer (TC 3.A.1.24) family. In terms of assembly, the complex is composed of two ATP-binding proteins (MetN), two transmembrane proteins (MetI) and a solute-binding protein (MetQ).

Its subcellular location is the cell inner membrane. The enzyme catalyses L-methionine(out) + ATP + H2O = L-methionine(in) + ADP + phosphate + H(+). It carries out the reaction D-methionine(out) + ATP + H2O = D-methionine(in) + ADP + phosphate + H(+). In terms of biological role, part of the ABC transporter complex MetNIQ involved in methionine import. Responsible for energy coupling to the transport system. The sequence is that of Methionine import ATP-binding protein MetN 2 from Pseudomonas savastanoi pv. phaseolicola (strain 1448A / Race 6) (Pseudomonas syringae pv. phaseolicola (strain 1448A / Race 6)).